A 281-amino-acid chain; its full sequence is Pantothenate synthetase (281 aa).

ATP is bound at residue 30–37 (MGYLHEGH). The active-site Proton donor is the H37. Residue Q61 participates in (R)-pantoate binding. Q61 is a binding site for beta-alanine. 147–150 (GQKD) is an ATP binding site. A (R)-pantoate-binding site is contributed by Q153. Residues V176 and 184–187 (MSSR) contribute to the ATP site.

The protein belongs to the pantothenate synthetase family. In terms of assembly, homodimer.

It localises to the cytoplasm. It catalyses the reaction (R)-pantoate + beta-alanine + ATP = (R)-pantothenate + AMP + diphosphate + H(+). It participates in cofactor biosynthesis; (R)-pantothenate biosynthesis; (R)-pantothenate from (R)-pantoate and beta-alanine: step 1/1. Functionally, catalyzes the condensation of pantoate with beta-alanine in an ATP-dependent reaction via a pantoyl-adenylate intermediate. This Heliobacterium modesticaldum (strain ATCC 51547 / Ice1) protein is Pantothenate synthetase.